Reading from the N-terminus, the 880-residue chain is Paramyosin (880 aa).

The nonhelical region stretch occupies residues 1-34 (MSGSLYRSPSAALYKSPSMSAFGGLPAAFGSMSV). Residues 35 to 859 (ADLGSLTRLE…LIRAKHRHQL (825 aa)) are a coiled coil. The interval 860–880 (LRAKMLQRQKFTFSKMSNRDN) is nonhelical region.

Belongs to the paramyosin family. Homodimer.

The protein localises to the cytoplasm. It localises to the myofibril. Functionally, paramyosin is a major structural component of many thick filaments isolated from invertebrate muscles. In Brugia malayi (Filarial nematode worm), this protein is Paramyosin.